The sequence spans 57 residues: Thiocillin GE37468 (57 aa).

Residues 1–42 (MGNNEEYFIDVNDLSIDVFDVVEQGGAVTALTADHGMPEVGA) constitute a propeptide, removed in mature form. The 5-methyloxazole-4-carboxylic acid (Ser-Thr) cross-link spans 43–44 (ST). The segment at residues 43–52 (STNCFCYICC) is a cross-link (pyridine-2,5-dicarboxylic acid (Ser-Cys) (with S-53)). Residues 43–53 (STNCFCYICCS) constitute a cross-link (pyridine-2,5-dicarboxylic acid (Ser-Ser) (with C-52)). Residues 45 to 46 (NC) constitute a cross-link (thiazole-4-carboxylic acid (Asn-Cys)). Positions 47 to 48 (FC) form a cross-link, thiazoline-4-carboxylic acid (Phe-Cys). Isoleucine 50 bears the 5-hydroxy-3-methylproline (Ile) mark. A cross-link (thiazole-4-carboxylic acid (Ile-Cys)) is located at residues 50-51 (IC). The segment at residues 51–52 (CC) is a cross-link (thiazole-4-carboxylic acid (Cys-Cys)). Residues 53 to 54 (SC) constitute a cross-link (thiazole-4-carboxylic acid (Ser-Cys)). 2,3-didehydroalanine (Ser) is present on residues serine 55 and serine 56. Asparagine 57 is a propeptide (removed in mature form).

In terms of processing, maturation of thiazole and oxazole containing antibiotics involves the enzymatic condensation of a Cys, Ser or Thr with the alpha-carbonyl of the preceding amino acid to form a thioether or ether bond, then dehydration to form a double bond with the alpha-amino nitrogen. Thiazoline or oxazoline ring are dehydrogenated to form thiazole or oxazole rings. Post-translationally, maturation of pyridinyl containing antibiotics involves the cross-linking of a Ser and a Cys-Ser pair usually separated by 7 or 8 residues along the peptide chain. The Ser residues are dehydrated to didehydroalanines, then bonded between their beta carbons. The alpha carbonyl of the Cys condenses with alpha carbon of the first Ser to form a pyridinyl ring. The ring may be multiply dehydrogenated to form a pyridine ring with loss of the amino nitrogen of the first Ser.

The protein resides in the secreted. Functionally, has bacteriocidal activity against both aerobic and anaerobic Gram-positive bacteria. Inhibits growth of B.subtilis (MIC=0.047 ug/ml) and methicillin-resistant S.aureus (MRSA) (MIC=0.047 ug/ml). Has poor activity against Gram-negative bacteria, with the exception of B.fragilis. Inhibits bacterial protein biosynthesis by acting on elongation factor Tu (EF-Tu). Full antibiotic activity depends on the presence of the modified residue Ile-50. The protein is Thiocillin GE37468 (getA) of Streptomyces sp.